An 825-amino-acid chain; its full sequence is MTQEMENENLSFTQQLRKDGFIKDIDTNPTCFDDTDSQNQLPIIFIPNTILLPHTDITLNLDKQHTDNLLHTVDDNNHGIILTPKKLEEGNGNVEFYDVGVILEIKSLTEDKENELLPEEYVLELKVKDKVYVNKILKKDGFFHAQYKILPEENTLTEDEITELNKNIDETVLEIAKFLPNTDKYTRKILGKLDTQDKLAEVFPFLKVPINKKQELLELDSVKIRALKVIQLLLEQKDAIGIQMELAKKLNKKMNETHKNTLLREQMKLIQEELNMTDDTPAHKTYRERIKDAQLPKEVEEAALEEVTKLERQGQNNAEENIIRNYLDTILQLPWHKEENPTIDIVKAKKQLNDDHYGLKKVKTRIIQHLTVLKMKKDKQGSILLFVGPPGTGKTSLGKSIAAALERPYVRVSLGGVNDESEIRGHRRTYLGALPGRIINGMKKAGKTNPVFVLDEIDKMTESLNGNPTSALLEVLDPEQNDSFSDNYLEVPYDLSDVFFIGTANSLQDIPGPLRDRLEIIELDSYTNTEKHHIADEHLIKEVLLEHGLTEDDLKITYDAIDCLIEKYTRESGVRGLKREIAAIARYVTEKIVVDNVERPYVVDENMLYDILGHEKSHYDKVPDSNPPGVVTGLAWTPIGGDILFIEAVLLPGEEKLKLTGQLGDVMKESAQIAQSLIKSRLATVLKDSDIEKRDIHIHVPAGSIPKDGPSAGVTLLTTIASLVTNTPVDSTLAMTGEISLRGKVLPVGGIKEKVIAAHRSGIKTVLLPEENMKDLDDVPCEVKDDMTFKPMKTVDEVLYEALGLKLPENKPLNISIDEINKVTP.

In terms of domain architecture, Lon N-terminal spans 41 to 237 (LPIIFIPNTI…KVIQLLLEQK (197 aa)). 388-395 (GPPGTGKT) provides a ligand contact to ATP. One can recognise a Lon proteolytic domain in the interval 625–805 (SNPPGVVTGL…DEVLYEALGL (181 aa)). Active-site residues include Ser711 and Lys754.

Belongs to the peptidase S16 family. As to quaternary structure, homohexamer. Organized in a ring with a central cavity.

It is found in the cytoplasm. It catalyses the reaction Hydrolysis of proteins in presence of ATP.. In terms of biological role, ATP-dependent serine protease that mediates the selective degradation of mutant and abnormal proteins as well as certain short-lived regulatory proteins. Required for cellular homeostasis and for survival from DNA damage and developmental changes induced by stress. Degrades polypeptides processively to yield small peptide fragments that are 5 to 10 amino acids long. Binds to DNA in a double-stranded, site-specific manner. In Methanosphaera stadtmanae (strain ATCC 43021 / DSM 3091 / JCM 11832 / MCB-3), this protein is Lon protease.